A 159-amino-acid chain; its full sequence is Putative 4-hydroxy-4-methyl-2-oxoglutarate aldolase (159 aa).

Substrate contacts are provided by residues 75-78 and arginine 97; that span reads GDQL. Aspartate 98 is an a divalent metal cation binding site.

It belongs to the class II aldolase/RraA-like family. In terms of assembly, homotrimer. A divalent metal cation serves as cofactor.

It catalyses the reaction 4-hydroxy-4-methyl-2-oxoglutarate = 2 pyruvate. It carries out the reaction oxaloacetate + H(+) = pyruvate + CO2. Catalyzes the aldol cleavage of 4-hydroxy-4-methyl-2-oxoglutarate (HMG) into 2 molecules of pyruvate. Also contains a secondary oxaloacetate (OAA) decarboxylase activity due to the common pyruvate enolate transition state formed following C-C bond cleavage in the retro-aldol and decarboxylation reactions. The sequence is that of Putative 4-hydroxy-4-methyl-2-oxoglutarate aldolase from Laribacter hongkongensis (strain HLHK9).